The sequence spans 197 residues: Imidazoleglycerol-phosphate dehydratase (197 aa).

The protein belongs to the imidazoleglycerol-phosphate dehydratase family.

The protein localises to the cytoplasm. The enzyme catalyses D-erythro-1-(imidazol-4-yl)glycerol 3-phosphate = 3-(imidazol-4-yl)-2-oxopropyl phosphate + H2O. It functions in the pathway amino-acid biosynthesis; L-histidine biosynthesis; L-histidine from 5-phospho-alpha-D-ribose 1-diphosphate: step 6/9. This is Imidazoleglycerol-phosphate dehydratase from Pseudomonas fluorescens (strain Pf0-1).